The following is a 431-amino-acid chain: MTVKTEAARDTLTYSRMRGMVAILIAFMKQRRMGLNDFIQKIANNSYACKHPEVQSILKISPPQEPELMNANPSPPPSPSQQINLGPSSNPHAKPSDFHFLKVIGKGSFGKVLLARHKAEEAFYAVKVLQKKAILKKKEEKHIMSERNVLLKNVKHPFLVGLHFSFQTADKLYFVLDYINGGELFYHLQRERCFLEPRARFYAAEIASALGYLHSLNIVYRDLKPENILLDSQGHIVLTDFGLCKENIEHNGTTSTFCGTPEYLAPEVLHKQPYDRTVDWWCLGAVLYEMLYGLPPFYSRNTAEMYDNILNKPLQLKPNITNSARHVLEGLLQKDRTKRLGAKDDFMEIKNHVFFSLINWEDLINKKITPPFNPNVSGPSDLRHFDPEFTEEPVPNSIGRSPDSLLLTASVKEAAEAFLGFSYAPPMDSFL.

The tract at residues 1-60 is necessary for localization to the mitochondria; that stretch reads MTVKTEAARDTLTYSRMRGMVAILIAFMKQRRMGLNDFIQKIANNSYACKHPEVQSILKI. Residues 64-92 form a disordered region; that stretch reads QEPELMNANPSPPPSPSQQINLGPSSNPH. S74 bears the Phosphoserine mark. S78 bears the Phosphoserine; by MAPK7 mark. A compositionally biased stretch (polar residues) spans 81-91; sequence QQINLGPSSNP. Residues 98–355 form the Protein kinase domain; it reads FHFLKVIGKG…FMEIKNHVFF (258 aa). Residues 104–112 and K127 each bind ATP; that span reads IGKGSFGKV. Positions 131-141 match the Nuclear localization signal motif; sequence KKAILKKKEEK. The active-site Proton acceptor is the D222. T256 bears the Phosphothreonine; by PDPK1 mark. Residues 356–431 enclose the AGC-kinase C-terminal domain; that stretch reads SLINWEDLIN…SYAPPMDSFL (76 aa). Residue T369 is modified to Phosphothreonine; by PKA. Phosphoserine occurs at positions 397, 401, and 422.

The protein belongs to the protein kinase superfamily. AGC Ser/Thr protein kinase family. Homodimer; disulfide-linked. Forms a trimeric complex with FBXW7 and NOTCH1. Interacts with MAPK3/ERK1, MAPK1/ERK2, MAP2K1/MEK1, MAP2K2/MEK2, NEDD4, NEDD4L, MAPT/TAU, MAPK7, CREB1, SLC9A3R2/NHERF2 and KCNJ1/ROMK1. Associates with the mammalian target of rapamycin complex 2 (mTORC2) via an interaction with MAPKAP1/SIN1. Regulated by phosphorylation. Activated by phosphorylation on Ser-422 by mTORC2, transforming it into a substrate for PDPK1 which phosphorylates it on Thr-256. Phosphorylation on Ser-397 and Ser-401 are also essential for its activity. Phosphorylation on Ser-78 by MAPK7 is required for growth factor-induced cell cycle progression. Post-translationally, ubiquitinated by NEDD4L; which promotes proteasomal degradation. Ubiquitinated by SYVN1 at the endoplasmic reticulum; which promotes rapid proteasomal degradation and maintains a high turnover rate in resting cells.

Its subcellular location is the cytoplasm. The protein localises to the nucleus. It localises to the endoplasmic reticulum membrane. It is found in the cell membrane. The protein resides in the mitochondrion. The enzyme catalyses L-seryl-[protein] + ATP = O-phospho-L-seryl-[protein] + ADP + H(+). The catalysed reaction is L-threonyl-[protein] + ATP = O-phospho-L-threonyl-[protein] + ADP + H(+). Two specific sites, one in the kinase domain (Thr-256) and the other in the C-terminal regulatory region (Ser-422), need to be phosphorylated for its full activation. Phosphorylation at Ser-397 and Ser-401 are also essential for its activity. Activated by WNK1, WNK2, WNK3 and WNK4; which promote phosphorylation by mTORC2. Functionally, serine/threonine-protein kinase which is involved in the regulation of a wide variety of ion channels, membrane transporters, cellular enzymes, transcription factors, neuronal excitability, cell growth, proliferation, survival, migration and apoptosis. Plays an important role in cellular stress response. Contributes to regulation of renal Na(+) retention, renal K(+) elimination, salt appetite, gastric acid secretion, intestinal Na(+)/H(+) exchange and nutrient transport, insulin-dependent salt sensitivity of blood pressure, salt sensitivity of peripheral glucose uptake, cardiac repolarization and memory consolidation. Up-regulates Na(+) channels: SCNN1A/ENAC, SCN5A and ASIC1/ACCN2, K(+) channels: KCNJ1/ROMK1, KCNA1-5, KCNQ1-5 and KCNE1, epithelial Ca(2+) channels: TRPV5 and TRPV6, chloride channels: BSND, CLCN2 and CFTR, glutamate transporters: SLC1A3/EAAT1, SLC1A2 /EAAT2, SLC1A1/EAAT3, SLC1A6/EAAT4 and SLC1A7/EAAT5, amino acid transporters: SLC1A5/ASCT2, SLC38A1/SN1 and SLC6A19, creatine transporter: SLC6A8, Na(+)/dicarboxylate cotransporter: SLC13A2/NADC1, Na(+)-dependent phosphate cotransporter: SLC34A2/NAPI-2B, glutamate receptor: GRIK2/GLUR6. Up-regulates carriers: SLC9A3/NHE3, SLC12A1/NKCC2, SLC12A3/NCC, SLC5A3/SMIT, SLC2A1/GLUT1, SLC5A1/SGLT1 and SLC15A2/PEPT2. Regulates enzymes: GSK3A/B, PMM2 and Na(+)/K(+) ATPase, and transcription factors: CTNNB1 and nuclear factor NF-kappa-B. Stimulates sodium transport into epithelial cells by enhancing the stability and expression of SCNN1A/ENAC. This is achieved by phosphorylating the NEDD4L ubiquitin E3 ligase, promoting its interaction with 14-3-3 proteins, thereby preventing it from binding to SCNN1A/ENAC and targeting it for degradation. Regulates store-operated Ca(+2) entry (SOCE) by stimulating ORAI1 and STIM1. Regulates KCNJ1/ROMK1 directly via its phosphorylation or indirectly via increased interaction with SLC9A3R2/NHERF2. Phosphorylates MDM2 and activates MDM2-dependent ubiquitination of p53/TP53. Phosphorylates MAPT/TAU and mediates microtubule depolymerization and neurite formation in hippocampal neurons. Phosphorylates SLC2A4/GLUT4 and up-regulates its activity. Phosphorylates APBB1/FE65 and promotes its localization to the nucleus. Phosphorylates MAPK1/ERK2 and activates it by enhancing its interaction with MAP2K1/MEK1 and MAP2K2/MEK2. Phosphorylates FBXW7 and plays an inhibitory role in the NOTCH1 signaling. Phosphorylates FOXO1 resulting in its relocalization from the nucleus to the cytoplasm. Phosphorylates FOXO3, promoting its exit from the nucleus and interference with FOXO3-dependent transcription. Phosphorylates BRAF and MAP3K3/MEKK3 and inhibits their activity. Phosphorylates SLC9A3/NHE3 in response to dexamethasone, resulting in its activation and increased localization at the cell membrane. Phosphorylates CREB1. Necessary for vascular remodeling during angiogenesis. The polypeptide is Serine/threonine-protein kinase Sgk1 (SGK1) (Bos taurus (Bovine)).